Reading from the N-terminus, the 471-residue chain is Glutamate--tRNA ligase 1 (471 aa).

The short motif at 15–25 (PSPTGYLHIGG) is the 'HIGH' region element. Residues 243–247 (KLSKR) carry the 'KMSKS' region motif. Lys-246 serves as a coordination point for ATP.

Belongs to the class-I aminoacyl-tRNA synthetase family. Glutamate--tRNA ligase type 1 subfamily. Monomer.

The protein localises to the cytoplasm. It catalyses the reaction tRNA(Glu) + L-glutamate + ATP = L-glutamyl-tRNA(Glu) + AMP + diphosphate. In terms of biological role, catalyzes the attachment of glutamate to tRNA(Glu) in a two-step reaction: glutamate is first activated by ATP to form Glu-AMP and then transferred to the acceptor end of tRNA(Glu). The chain is Glutamate--tRNA ligase 1 from Dinoroseobacter shibae (strain DSM 16493 / NCIMB 14021 / DFL 12).